The following is a 927-amino-acid chain: Lysine-specific demethylase JMJ28 (927 aa).

A WRC domain is found at 7 to 52 (VPDEFRCNRSDGKQWRCKRRALEGKKMCESHHSQQSLKRSKQKVAE). Residues 30 to 37 (GKKMCESH) carry the Nuclear localization signal 1 motif. Positions 30 to 92 (GKKMCESHHS…RLGKSKRKRV (63 aa)) are disordered. Basic residues predominate over residues 80–91 (RSKRLGKSKRKR). Positions 127-134 (EKRKRLPN) match the Nuclear localization signal 2 motif. Residues Cys227, Cys230, Cys241, Cys244, Cys250, Cys253, Cys269, and Cys272 each coordinate Zn(2+). The RING-type; degenerate zinc-finger motif lies at 227–273 (CHWCGTRGFGDLISCLSCEREFFCIDCIEKRNKGSKEEVEKKCPVCR). The span at 330-339 (ENDAEKKEGN) shows a compositional bias: basic and acidic residues. Disordered regions lie at residues 330 to 359 (ENDAEKKEGNPAEPQIHSSELTSDDRQPCS) and 701 to 736 (RSKNPAKGRESRFDKGKKRDRLDDYSSSDSESSQHC). The JmjC domain occupies 601 to 881 (FPNHYAEILN…ESIKRVKELN (281 aa)).

Belongs to the JARID1 histone demethylase family. In terms of assembly, interacts with the FBH transcription factors FBH1, FBH2, FBH3 and FBH4. Fe(2+) serves as cofactor. In terms of tissue distribution, expressed in inflorescences, flowers, roots, siliques, leaves and stems, especially in the vasculature (mainly phloem), with highest levels in floral organs. Present at high levels in flowers, shoot apex and young seeds, but observed at low levels in dry seeds, root apex and anthers.

It localises to the nucleus. In terms of biological role, may function as histone H3 lysine demethylase and be involved in regulation of gene expression. Regulates flowering time by promoting CONSTANS (CO) and CONSTANS-LIKE genes (e.g. COL2 and COL5) expression via interaction with FBH transcription factors (FBH1, FBH2, FBH3 and FBH4) at their loci to remove H3K9me2 repressive histone marks. Also modulates the expression of several developmental genes such as MYB30, TFS1, AGL6 and RVE2. The protein is Lysine-specific demethylase JMJ28 of Arabidopsis thaliana (Mouse-ear cress).